Here is a 310-residue protein sequence, read N- to C-terminus: tRNA dimethylallyltransferase (310 aa).

12–19 contributes to the ATP binding site; the sequence is GPTATGKT. Position 14–19 (14–19) interacts with substrate; it reads TATGKT. An interaction with substrate tRNA region spans residues 37-40; that stretch reads DSMM.

This sequence belongs to the IPP transferase family. In terms of assembly, monomer. Requires Mg(2+) as cofactor.

It catalyses the reaction adenosine(37) in tRNA + dimethylallyl diphosphate = N(6)-dimethylallyladenosine(37) in tRNA + diphosphate. In terms of biological role, catalyzes the transfer of a dimethylallyl group onto the adenine at position 37 in tRNAs that read codons beginning with uridine, leading to the formation of N6-(dimethylallyl)adenosine (i(6)A). The polypeptide is tRNA dimethylallyltransferase (Desulforudis audaxviator (strain MP104C)).